A 293-amino-acid chain; its full sequence is Pyridoxal 5'-phosphate synthase subunit PdxS (293 aa).

Aspartate 23 is a D-ribose 5-phosphate binding site. Residue lysine 80 is the Schiff-base intermediate with D-ribose 5-phosphate of the active site. Glycine 152 is a binding site for D-ribose 5-phosphate. Residue arginine 164 coordinates D-glyceraldehyde 3-phosphate. Residues glycine 213 and 234–235 (GS) contribute to the D-ribose 5-phosphate site.

The protein belongs to the PdxS/SNZ family. In the presence of PdxT, forms a dodecamer of heterodimers.

It catalyses the reaction aldehydo-D-ribose 5-phosphate + D-glyceraldehyde 3-phosphate + L-glutamine = pyridoxal 5'-phosphate + L-glutamate + phosphate + 3 H2O + H(+). The protein operates within cofactor biosynthesis; pyridoxal 5'-phosphate biosynthesis. Catalyzes the formation of pyridoxal 5'-phosphate from ribose 5-phosphate (RBP), glyceraldehyde 3-phosphate (G3P) and ammonia. The ammonia is provided by the PdxT subunit. Can also use ribulose 5-phosphate and dihydroxyacetone phosphate as substrates, resulting from enzyme-catalyzed isomerization of RBP and G3P, respectively. In Thermus thermophilus (strain ATCC BAA-163 / DSM 7039 / HB27), this protein is Pyridoxal 5'-phosphate synthase subunit PdxS.